Reading from the N-terminus, the 565-residue chain is NAD-dependent malic enzyme (565 aa).

Catalysis depends on tyrosine 104, which acts as the Proton donor. An NAD(+)-binding site is contributed by arginine 157. The Proton acceptor role is filled by lysine 175. A divalent metal cation is bound by residues glutamate 246, aspartate 247, and aspartate 270. The NAD(+) site is built by aspartate 270 and asparagine 418.

It belongs to the malic enzymes family. Homotetramer. It depends on Mg(2+) as a cofactor. The cofactor is Mn(2+).

The enzyme catalyses (S)-malate + NAD(+) = pyruvate + CO2 + NADH. The catalysed reaction is oxaloacetate + H(+) = pyruvate + CO2. This Escherichia coli O9:H4 (strain HS) protein is NAD-dependent malic enzyme.